The chain runs to 798 residues: Cold shock domain-containing protein E1 (798 aa).

Residues 26–87 (ETGVIEKLLT…RTGKPIAIKL (62 aa)) form the CSD 1 domain. Position 81 is an N6-acetyllysine (K81). A Glycyl lysine isopeptide (Lys-Gly) (interchain with G-Cter in SUMO2) cross-link involves residue K91. S123 carries the phosphoserine modification. A CSD 2; truncated domain is found at 136 to 179 (VFYLTYTSEDVEGNVQLETGDKINFVIDNNKHTGAVSARNIMLL). In terms of domain architecture, CSD 3 spans 186-245 (YQGVVCAMKEAFGFIERGDVVKEIFFHYSEFKGDLETLQPGDDVEFTIKDRNGKEVATDV). At S276 the chain carries Phosphoserine. In terms of domain architecture, CSD 4; truncated spans 297-337 (LPFGDKDTKSKVTLLEGDHVRFNISTDRRDKLERATNIEVL). CSD domains are found at residues 349–410 (EMGV…AIRI) and 447–507 (NKGK…ATCV). S514 is subject to Phosphoserine. The region spanning 519 to 579 (LLGYVATLKD…KGNKVSAEKV (61 aa)) is the CSD 7 domain. The residue at position 584 (S584) is a Phosphoserine. 2 consecutive CSD domains span residues 610–670 (PTQI…AYNI) and 674–735 (RRAT…ACNV). One can recognise an SUZ-C domain in the interval 748 to 789 (PRPDRLVNRLKNITLDDASAPRLMVLRQPRGPDNSMGFGAER). T761 is subject to Phosphothreonine.

It belongs to the UNR family. As to quaternary structure, component of a multi subunit autoregulatory ribonucleoprotein complex (ARC), at least composed of IGF2BP1, PABPC1 and CSDE1. Interacts with STRAP. Part of a complex associated with the FOS mCRD domain and consisting of PABPC1, PAIP1, HNRPD and SYNCRIP. The interaction with PABPC1 is direct and RNA-independent. Interacts with EIF4ENIF1/4E-T.

Its subcellular location is the cytoplasm. The protein resides in the stress granule. It is found in the P-body. Its function is as follows. RNA-binding protein involved in translationally coupled mRNA turnover. Implicated with other RNA-binding proteins in the cytoplasmic deadenylation/translational and decay interplay of the FOS mRNA mediated by the major coding-region determinant of instability (mCRD) domain. Required for efficient formation of stress granules. This chain is Cold shock domain-containing protein E1, found in Rattus norvegicus (Rat).